A 149-amino-acid polypeptide reads, in one-letter code: uncharacterized protein (149 aa).

Ser-21 is subject to Phosphoserine. The next 2 helical transmembrane spans lie at 48 to 68 (FMEF…WVLG) and 72 to 92 (VLAA…FQLV). The segment at 116-149 (AEEVPPPSYPSLEEENEGNEEIEESEEMNTLLSK) is disordered. Residues 127–142 (LEEENEGNEEIEESEE) are compositionally biased toward acidic residues.

The protein resides in the membrane. This is an uncharacterized protein from Schizosaccharomyces pombe (strain 972 / ATCC 24843) (Fission yeast).